A 39-amino-acid chain; its full sequence is Photosystem II reaction center protein L (39 aa).

A helical membrane pass occupies residues 18–38; sequence SLYLGLLLVAVLGILFSSYFF.

Belongs to the PsbL family. PSII is composed of 1 copy each of membrane proteins PsbA, PsbB, PsbC, PsbD, PsbE, PsbF, PsbH, PsbI, PsbJ, PsbK, PsbL, PsbM, PsbT, PsbX, PsbY, PsbZ, Psb30/Ycf12, peripheral proteins PsbO, CyanoQ (PsbQ), PsbU, PsbV and a large number of cofactors. It forms dimeric complexes.

It localises to the cellular thylakoid membrane. Functionally, one of the components of the core complex of photosystem II (PSII). PSII is a light-driven water:plastoquinone oxidoreductase that uses light energy to abstract electrons from H(2)O, generating O(2) and a proton gradient subsequently used for ATP formation. It consists of a core antenna complex that captures photons, and an electron transfer chain that converts photonic excitation into a charge separation. This subunit is found at the monomer-monomer interface and is required for correct PSII assembly and/or dimerization. The sequence is that of Photosystem II reaction center protein L from Microcystis aeruginosa (strain NIES-843 / IAM M-2473).